A 126-amino-acid polypeptide reads, in one-letter code: Large ribosomal subunit protein bL17 (126 aa).

Belongs to the bacterial ribosomal protein bL17 family. As to quaternary structure, part of the 50S ribosomal subunit. Contacts protein L32.

The chain is Large ribosomal subunit protein bL17 from Lactococcus lactis subsp. lactis (strain IL1403) (Streptococcus lactis).